Here is a 635-residue protein sequence, read N- to C-terminus: Factor of DNA methylation 2 (635 aa).

Residues 289–471 (LDEKKNLHQA…ESMNSVLMTK (183 aa)) are a coiled coil. Over residues 350-365 (ELERQKLDEDKRKSDA) the composition is skewed to basic and acidic residues. The interval 350–376 (ELERQKLDEDKRKSDAMNKSLQLASRE) is disordered.

Forms a complex with IDN2 and FMD1/INDL1. As to expression, highly expressed in flowers and at lower levels in roots, leaves and stems.

Functionally, forms a complex with IDN2 and FDM1/IDNL1 that is required for RNA-directed DNA methylation (RdDM) and that functions at a downstream step of the RdDM pathway. The sequence is that of Factor of DNA methylation 2 from Arabidopsis thaliana (Mouse-ear cress).